The chain runs to 262 residues: Acyl-[acyl-carrier-protein]--UDP-N-acetylglucosamine O-acyltransferase (262 aa).

This sequence belongs to the transferase hexapeptide repeat family. LpxA subfamily. Homotrimer.

The protein localises to the cytoplasm. It catalyses the reaction a (3R)-hydroxyacyl-[ACP] + UDP-N-acetyl-alpha-D-glucosamine = a UDP-3-O-[(3R)-3-hydroxyacyl]-N-acetyl-alpha-D-glucosamine + holo-[ACP]. The protein operates within glycolipid biosynthesis; lipid IV(A) biosynthesis; lipid IV(A) from (3R)-3-hydroxytetradecanoyl-[acyl-carrier-protein] and UDP-N-acetyl-alpha-D-glucosamine: step 1/6. In terms of biological role, involved in the biosynthesis of lipid A, a phosphorylated glycolipid that anchors the lipopolysaccharide to the outer membrane of the cell. The chain is Acyl-[acyl-carrier-protein]--UDP-N-acetylglucosamine O-acyltransferase from Shigella dysenteriae serotype 1 (strain Sd197).